The primary structure comprises 253 residues: Phosphate import ATP-binding protein PstB (253 aa).

The 241-residue stretch at 8-248 folds into the ABC transporter domain; the sequence is IQVRDLDLFY…PRDKRTEDYI (241 aa). 40-47 is a binding site for ATP; that stretch reads GPSGCGKS.

This sequence belongs to the ABC transporter superfamily. Phosphate importer (TC 3.A.1.7) family. The complex is composed of two ATP-binding proteins (PstB), two transmembrane proteins (PstC and PstA) and a solute-binding protein (PstS).

The protein resides in the cell membrane. It catalyses the reaction phosphate(out) + ATP + H2O = ADP + 2 phosphate(in) + H(+). Part of the ABC transporter complex PstSACB involved in phosphate import. Responsible for energy coupling to the transport system. This is Phosphate import ATP-binding protein PstB from Clostridium perfringens (strain ATCC 13124 / DSM 756 / JCM 1290 / NCIMB 6125 / NCTC 8237 / Type A).